The sequence spans 135 residues: Beta/delta-urticatoxin-Ui2a (135 aa).

The first 18 residues, 1–18 (MGAIVLVAIMALVASSSA), serve as a signal peptide directing secretion. A propeptide spanning residues 19–72 (FSDDEQNMMNAEGEKGIRSYSAADDVSDMIESLFVNSGNRNLVLMMLSGRPQPN) is cleaved from the precursor. Disulfide bonds link C75-C92, C82-C97, C91-C105, C107-C121, C114-C126, and C120-C134.

The protein belongs to the urticatoxin-2 family. As to expression, expressed in trichomes, that are stiff epidermal hairs located on the surface of petioles and leaves.

It localises to the secreted. In terms of biological role, plant defense neurotoxin that causes pain and systemic symptoms in mammals via modulation of voltage-gated sodium channels (Nav). Potent modulator of human Nav1.5/SCN5A (EC(50)=55 nM), Nav1.6/SCN8A (EC(50)=0.86 nM), and Nav1.7/SCN9A (EC(50)=208 nM), where it shifts the activation threshold to more negative potentials and delays fast inactivation. Also shifts the voltage-dependence of steady-state fast inactivation of Nav1.6/SCN8A, but not that of Nav1.5/SCN5A or Nav1.7/SCN9A. On Nav1.7/SCN9A, principally acts by binding to extracellular loops of domain IV (Nav site 3). In vivo, intraplantar injection into mice causes numerous dose-dependent, immediate, and long-lasting spontaneous pain behaviors, while no swelling is observed in the injected paw. At the highest doses tested, systemic symptoms including hypokinesia and hypersalivation are observed. This is Beta/delta-urticatoxin-Ui2a from Urtica incisa (Scrub nettle).